A 152-amino-acid polypeptide reads, in one-letter code: MGRFIFLSSGLLVVFLSLSGTGADFQCPSEWSAYGQHCYRAFKYEKSWAEAEKFCMEQANDGHLVSIQSIKEANFVAKLVSGIIAYIWIGLRDRRKEQQCTSEWNDGSKVTYVNWREGESQMCQVLAIWSGFKNWVNTDCASHNPFVCKSPA.

The N-terminal stretch at 1–23 is a signal peptide; that stretch reads MGRFIFLSSGLLVVFLSLSGTGA. 3 disulfide bridges follow: Cys-27/Cys-38, Cys-55/Cys-148, and Cys-123/Cys-140. One can recognise a C-type lectin domain in the interval 34–149; the sequence is YGQHCYRAFK…CASHNPFVCK (116 aa).

The protein belongs to the snaclec family. As to quaternary structure, heterodimer; disulfide-linked. In terms of tissue distribution, expressed by the venom gland.

The protein localises to the secreted. Interferes with one step of hemostasis (modulation of platelet aggregation, or coagulation cascade, for example). This chain is Snaclec 5, found in Bitis arietans (African puff adder).